The chain runs to 256 residues: LexA repressor (256 aa).

Residues 1-31 (MTSQGRGTRRGGTRGNVRAFPEGPTDAGLTP) form a disordered region. The segment at residues 53–73 (VREIGEAVGLTSTSSVAHQLK) is a DNA-binding region (H-T-H motif). Active-site for autocatalytic cleavage activity residues include Ser180 and Lys217.

It belongs to the peptidase S24 family. Homodimer.

It catalyses the reaction Hydrolysis of Ala-|-Gly bond in repressor LexA.. In terms of biological role, represses a number of genes involved in the response to DNA damage (SOS response), including recA and lexA. In the presence of single-stranded DNA, RecA interacts with LexA causing an autocatalytic cleavage which disrupts the DNA-binding part of LexA, leading to derepression of the SOS regulon and eventually DNA repair. In Frankia casuarinae (strain DSM 45818 / CECT 9043 / HFP020203 / CcI3), this protein is LexA repressor.